The sequence spans 473 residues: Reticulon-4 receptor (473 aa).

The first 26 residues, 1-26, serve as a signal peptide directing secretion; the sequence is MKRASSGGSRLLAWVLWLQAWRVATP. 2 disulfides stabilise this stretch: C27/C33 and C31/C43. The 31-residue stretch at 27 to 57 folds into the LRRNT domain; that stretch reads CPGACVCYNEPKVTTSCPQQGLQAVPTGIPA. LRR repeat units lie at residues 58–79, 82–103, 106–128, 131–152, 155–176, 179–200, 203–224, and 227–248; these read SSQRIFLHGNRISHVPAASFQS, NLTILWLHSNALARIDAAAFTG, LLEQLDLSDNAQLHVVDPTTFHG, HLHTLHLDRCGLRELGPGLFRG, ALQYLYLQDNNLQALPDNTFRD, NLTHLFLHGNRIPSVPEHAFRG, SLDRLLLHQNHVARVHPHAFRD, and RLMTLYLFANNLSMLPAEVLMP. N82 carries an N-linked (GlcNAc...) asparagine glycan. A glycan (N-linked (GlcNAc...) asparagine) is linked at N179. In terms of domain architecture, LRRCT spans 260-311; the sequence is NPWVCDCRARPLWAWLQKFRGSSSEVPCNLPQRLADRDLKRLAASDLEGCAV. 3 disulfide bridges follow: C264-C287, C266-C335, and C309-C336. The disordered stretch occupies residues 346 to 446; that stretch reads VLEPGRPASA…GASGTGDAEG (101 aa). N372 is a glycosylation site (N-linked (GlcNAc...) asparagine). A compositionally biased stretch (basic residues) spans 413–429; sequence PRRRPGCSRKNRTRSHC. The span at 434–445 shows a compositional bias: gly residues; it reads AGSGASGTGDAE. S447 is lipidated: GPI-anchor amidated serine. Residues 448–473 constitute a propeptide, removed in mature form; it reads GALPALACSLAPLGLALVLWTVLGPC.

Belongs to the Nogo receptor family. In terms of assembly, homodimer. Interacts with MAG. Interacts with RTN4. Interacts with NGFR. Interacts with LINGO1. Interacts with KIAA0319L. Interacts with OLFM1; this inhibits interaction with LINGO1 and NGFR. Interacts with OMG. Post-translationally, N-glycosylated. O-glycosylated. Contains terminal sialic acid groups on its glycan chains. As to expression, detected in embryonic hippocampus neurons. Detected in brain (at protein level). Detected in neurons in the neocortex, in hippocampus, dorsal thalamus, cerebellum granule cell layer and the mitral cell layer in the olfactory bulb. Detected in brain, dorsal root ganglion and heart.

It is found in the cell membrane. Its subcellular location is the membrane raft. It localises to the cell projection. The protein localises to the dendrite. The protein resides in the axon. It is found in the perikaryon. Its function is as follows. Receptor for RTN4, OMG and MAG. Functions as a receptor for the sialylated gangliosides GT1b and GM1. Besides, functions as a receptor for chondroitin sulfate proteoglycans. Can also bind heparin. Intracellular signaling cascades are triggered via the coreceptor NGFR. Signaling mediates activation of Rho and downstream reorganization of the actin cytoskeleton. Mediates axonal growth inhibition. Mediates axonal growth inhibition and plays a role in regulating axon regeneration and neuronal plasticity in the adult central nervous system. Plays a role in postnatal brain development. Required for normal axon migration across the brain midline and normal formation of the corpus callosum. Protects motoneurons against apoptosis; protection against apoptosis is probably mediated via interaction with MAG. Acts in conjunction with RTN4 and LINGO1 in regulating neuronal precursor cell motility during cortical development. Like other family members, plays a role in restricting the number dendritic spines and the number of synapses that are formed during brain development. The polypeptide is Reticulon-4 receptor (Rtn4r) (Mus musculus (Mouse)).